A 298-amino-acid polypeptide reads, in one-letter code: MTDAAVSFAKDFLAGGVAAAISKTAVAPIERVKLLLQVQHASKQITADKQYKGIIDCVVRIPKEQGVLSFWRGNLANVIRYFPTQALNFAFKDKYKQIFLGGVDKRTQFWRYFAGNLASGGAAGATSLCFVYPLDFARTRLAADVGKAGAEREFRGLGDCLVKIYKSDGIRGLYQGFNVSVQGIIIYRAAYFGIYDTAKGMLPDPKNTHIFISWMIAQSVTAVAGLTSYPFDTVRRRMMMQSGRKGTDIMYTGTLDCWRKIARDEGAKAFFKGAWSNVLRGMGGAFVLVLYDEIKKFT.

An N-acetylmethionine modification is found at methionine 1. The Mitochondrial intermembrane segment spans residues 1 to 7 (MTDAAVS). Threonine 2 is modified (N-acetylthreonine; in ADP/ATP translocase 2, N-terminally processed). Residues 6 to 98 (VSFAKDFLAG…FAFKDKYKQI (93 aa)) form a Solcar 1 repeat. The residue at position 7 (serine 7) is a Phosphoserine. Residues 8–37 (FAKDFLAGGVAAAISKTAVAPIERVKLLLQ) form a helical membrane-spanning segment. Lysine 23 is modified (N6-malonyllysine). Residues 38 to 74 (VQHASKQITADKQYKGIIDCVVRIPKEQGVLSFWRGN) lie on the Mitochondrial matrix side of the membrane. Lysine 43 is modified (N6-succinyllysine). An N6,N6,N6-trimethyllysine; alternate modification is found at lysine 52. Lysine 52 carries the N6,N6-dimethyllysine; alternate modification. Lysine 52 carries the N6-methyllysine; alternate modification. A helical transmembrane segment spans residues 75–99 (LANVIRYFPTQALNFAFKDKYKQIF). Positions 80 and 92 each coordinate ADP. An N6-malonyllysine mark is found at lysine 92 and lysine 96. Over 100-109 (LGGVDKRTQF) the chain is Mitochondrial intermembrane. The residue at position 105 (lysine 105) is an N6-acetyllysine; alternate. An N6-succinyllysine; alternate modification is found at lysine 105. Residues 110–130 (WRYFAGNLASGGAAGATSLCF) traverse the membrane as a helical segment. Solcar repeat units lie at residues 111–201 (RYFA…AKGM) and 212–297 (ISWM…IKKF). At 131–178 (VYPLDFARTRLAADVGKAGAEREFRGLGDCLVKIYKSDGIRGLYQGFN) the chain is on the mitochondrial matrix side. Lysine 147 bears the N6-methyllysine; alternate mark. N6-acetyllysine; alternate is present on lysine 147. Lysine 147 bears the N6-succinyllysine; alternate mark. Lysine 147 bears the N6-malonyllysine; alternate mark. N6-acetyllysine occurs at positions 163 and 166. Residues 179–199 (VSVQGIIIYRAAYFGIYDTAK) traverse the membrane as a helical segment. Residues 200–210 (GMLPDPKNTHI) are Mitochondrial intermembrane-facing. The helical transmembrane segment at 211–231 (FISWMIAQSVTAVAGLTSYPF) threads the bilayer. The Mitochondrial matrix portion of the chain corresponds to 232–273 (DTVRRRMMMQSGRKGTDIMYTGTLDCWRKIARDEGAKAFFKG). Arginine 235 contributes to the ADP binding site. The segment at 235-240 (RRRMMM) is important for transport activity. The short motif at 235–240 (RRRMMM) is the Nucleotide carrier signature motif element. Position 268 is an N6-acetyllysine; alternate (lysine 268). Residue lysine 268 is modified to N6-succinyllysine; alternate. The chain crosses the membrane as a helical span at residues 274 to 291 (AWSNVLRGMGGAFVLVLY). Topologically, residues 292–298 (DEIKKFT) are mitochondrial intermembrane.

The protein belongs to the mitochondrial carrier (TC 2.A.29) family. As to quaternary structure, monomer. Component of the MMXD complex, which includes CIAO1, ERCC2, CIAO2B, MMS19 and SLC25A5/ANT2. Interacts with AK4. Interacts with TIMM44; leading to inhibit the presequence translocase TIMM23, thereby promoting stabilization of PINK1. Post-translationally, trimethylated by ANTKMT at Lys-52.

Its subcellular location is the mitochondrion inner membrane. It localises to the membrane. It carries out the reaction ADP(in) + ATP(out) = ADP(out) + ATP(in). The catalysed reaction is H(+)(in) = H(+)(out). With respect to regulation, the matrix-open state (m-state) is inhibited by the membrane-permeable bongkrekic acid (BKA). The cytoplasmic-open state (c-state) is inhibited by the membrane-impermeable toxic inhibitor carboxyatractyloside (CATR). Proton transporter activity is inhibited by ADP:ATP antiporter activity. Functionally, ADP:ATP antiporter that mediates import of ADP into the mitochondrial matrix for ATP synthesis, and export of ATP out to fuel the cell. Cycles between the cytoplasmic-open state (c-state) and the matrix-open state (m-state): operates by the alternating access mechanism with a single substrate-binding site intermittently exposed to either the cytosolic (c-state) or matrix (m-state) side of the inner mitochondrial membrane. In addition to its ADP:ATP antiporter activity, also involved in mitochondrial uncoupling and mitochondrial permeability transition pore (mPTP) activity. Plays a role in mitochondrial uncoupling by acting as a proton transporter: proton transport uncouples the proton flows via the electron transport chain and ATP synthase to reduce the efficiency of ATP production and cause mitochondrial thermogenesis. Proton transporter activity is inhibited by ADP:ATP antiporter activity, suggesting that SLC25A5/ANT2 acts as a master regulator of mitochondrial energy output by maintaining a delicate balance between ATP production (ADP:ATP antiporter activity) and thermogenesis (proton transporter activity). Proton transporter activity requires free fatty acids as cofactor, but does not transport it. Probably mediates mitochondrial uncoupling in tissues that do not express UCP1. Also plays a key role in mPTP opening, a non-specific pore that enables free passage of the mitochondrial membranes to solutes of up to 1.5 kDa, and which contributes to cell death. It is however unclear if SLC25A5/ANT2 constitutes a pore-forming component of mPTP or regulates it. Acts as a regulator of mitophagy independently of ADP:ATP antiporter activity: promotes mitophagy via interaction with TIMM44, leading to inhibit the presequence translocase TIMM23, thereby promoting stabilization of PINK1. As part of the mitotic spindle-associated MMXD complex it may play a role in chromosome segregation. The polypeptide is ADP/ATP translocase 2 (Bos taurus (Bovine)).